Here is a 210-residue protein sequence, read N- to C-terminus: Thymidylate kinase (210 aa).

10–17 (GLEGAGKT) is a binding site for ATP.

It belongs to the thymidylate kinase family.

The catalysed reaction is dTMP + ATP = dTDP + ADP. In terms of biological role, phosphorylation of dTMP to form dTDP in both de novo and salvage pathways of dTTP synthesis. This Actinobacillus succinogenes (strain ATCC 55618 / DSM 22257 / CCUG 43843 / 130Z) protein is Thymidylate kinase.